The chain runs to 132 residues: ATP synthase epsilon chain (132 aa).

The protein belongs to the ATPase epsilon chain family. F-type ATPases have 2 components, CF(1) - the catalytic core - and CF(0) - the membrane proton channel. CF(1) has five subunits: alpha(3), beta(3), gamma(1), delta(1), epsilon(1). CF(0) has three main subunits: a, b and c.

Its subcellular location is the cell membrane. Produces ATP from ADP in the presence of a proton gradient across the membrane. The chain is ATP synthase epsilon chain (atpC) from Bacillus caldotenax.